A 394-amino-acid chain; its full sequence is Small RNA 2'-O-methyltransferase (394 aa).

S-adenosyl-L-methionine is bound by residues Asp78 and Ser114. Positions 132, 135, 136, and 181 each coordinate Mg(2+).

This sequence belongs to the methyltransferase superfamily. HEN1 family. Mg(2+) is required as a cofactor.

Its subcellular location is the cytoplasm. The enzyme catalyses small RNA 3'-end nucleotide + S-adenosyl-L-methionine = small RNA 3'-end 2'-O-methylnucleotide + S-adenosyl-L-homocysteine + H(+). Its function is as follows. Methyltransferase that adds a 2'-O-methyl group at the 3'-end of piRNAs, a class of 24 to 30 nucleotide RNAs that are generated by a Dicer-independent mechanism and are primarily derived from transposons and other repeated sequence elements. This probably protects the 3'-end of piRNAs from uridylation activity and subsequent degradation. Stabilization of piRNAs is essential for gametogenesis. This is Small RNA 2'-O-methyltransferase (Henmt1) from Rattus norvegicus (Rat).